The chain runs to 129 residues: Protein Turandot C (129 aa).

The N-terminal stretch at 1-21 (MNASISLLCFALLLISPFCLG) is a signal peptide.

It belongs to the Turandot family.

It is found in the secreted. Functionally, a humoral factor that may play a role in stress tolerance. In Drosophila sechellia (Fruit fly), this protein is Protein Turandot C.